We begin with the raw amino-acid sequence, 210 residues long: Orotate phosphoribosyltransferase (210 aa).

5-phospho-alpha-D-ribose 1-diphosphate-binding positions include Arg94, Lys98, His100, and 120 to 128 (EDLISTGGS). Ser124 serves as a coordination point for orotate.

It belongs to the purine/pyrimidine phosphoribosyltransferase family. PyrE subfamily. As to quaternary structure, homodimer. It depends on Mg(2+) as a cofactor.

It carries out the reaction orotidine 5'-phosphate + diphosphate = orotate + 5-phospho-alpha-D-ribose 1-diphosphate. Its pathway is pyrimidine metabolism; UMP biosynthesis via de novo pathway; UMP from orotate: step 1/2. In terms of biological role, catalyzes the transfer of a ribosyl phosphate group from 5-phosphoribose 1-diphosphate to orotate, leading to the formation of orotidine monophosphate (OMP). The protein is Orotate phosphoribosyltransferase of Bacillus cereus (strain ATCC 10987 / NRS 248).